A 369-amino-acid chain; its full sequence is 3-dehydroquinate synthase (369 aa).

Residues 75-80, 109-113, 133-134, Lys146, Lys155, and 173-176 contribute to the NAD(+) site; these read DGEEHK, GVIGD, TT, and TLKT. 3 residues coordinate Zn(2+): Glu188, His251, and His268.

It belongs to the sugar phosphate cyclases superfamily. Dehydroquinate synthase family. Co(2+) serves as cofactor. The cofactor is Zn(2+). It depends on NAD(+) as a cofactor.

The protein localises to the cytoplasm. It catalyses the reaction 7-phospho-2-dehydro-3-deoxy-D-arabino-heptonate = 3-dehydroquinate + phosphate. It participates in metabolic intermediate biosynthesis; chorismate biosynthesis; chorismate from D-erythrose 4-phosphate and phosphoenolpyruvate: step 2/7. Catalyzes the conversion of 3-deoxy-D-arabino-heptulosonate 7-phosphate (DAHP) to dehydroquinate (DHQ). This chain is 3-dehydroquinate synthase, found in Legionella pneumophila (strain Lens).